A 73-amino-acid chain; its full sequence is Gene 30 protein (73 aa).

Positions 12–66 constitute an HTH cro/C1-type domain; the sequence is LEKAINAVGGSQKVLAEKVGVTPQAINMLKKRGGSLPVTKMRKYEEVTGLPREVL. Residues 23-42 constitute a DNA-binding region (H-T-H motif); it reads QKVLAEKVGVTPQAINMLKK.

In Escherichia coli (Bacteriophage phi-80), this protein is Gene 30 protein (30).